A 623-amino-acid polypeptide reads, in one-letter code: Prothrombin (623 aa).

The N-terminal stretch at 1–24 (MAHVGGLWLHGCLALAVLVSLVHS) is a signal peptide. Positions 25–43 (QHVFMAPQQALSLLQRARR) are excised as a propeptide. One can recognise a Gla domain in the interval 44–90 (ANSGFFEEMRKGNLERECVEEQCSREEAYEALESPSETDAFWAKYTA). 10 positions are modified to 4-carboxyglutamate: glutamate 50, glutamate 51, glutamate 58, glutamate 60, glutamate 63, glutamate 64, glutamate 69, glutamate 70, glutamate 73, and glutamate 76. A disulfide bond links cysteine 61 and cysteine 66. 11 disulfides stabilise this stretch: cysteine 91/cysteine 104, cysteine 109/cysteine 187, cysteine 130/cysteine 170, cysteine 158/cysteine 182, cysteine 214/cysteine 292, cysteine 235/cysteine 275, cysteine 263/cysteine 287, cysteine 337/cysteine 483, cysteine 392/cysteine 408, cysteine 537/cysteine 551, and cysteine 565/cysteine 595. Kringle domains follow at residues 108-187 (NCAE…IPVC) and 213-292 (TCVP…LDYC). Asparagine 120 and asparagine 144 each carry an N-linked (GlcNAc...) asparagine glycan. One can recognise a Peptidase S1 domain in the interval 365-619 (IVEGSDAEIG…LKKWMQKVID (255 aa)). Residue histidine 407 is the Charge relay system of the active site. An N-linked (GlcNAc...) asparagine glycan is attached at asparagine 417. Aspartate 463 (charge relay system) is an active-site residue. The tract at residues 552–574 (AGYKPDEGKRGDACEGDSGGPFV) is high affinity receptor-binding region which is also known as the TP508 peptide. Serine 569 acts as the Charge relay system in catalysis.

The protein belongs to the peptidase S1 family. As to quaternary structure, heterodimer (named alpha-thrombin) of a light and a heavy chain; disulfide-linked. Forms a heterodimer with SERPINA5. In plasma, interacts (via N-terminus) with alpha-1-microglobulin; this interaction does not prevent the activation of prothrombin to thrombin. In terms of processing, the gamma-carboxyglutamyl residues, which bind calcium ions, result from the carboxylation of glutamyl residues by a microsomal enzyme, the vitamin K-dependent carboxylase. The modified residues are necessary for the calcium-dependent interaction with a negatively charged phospholipid surface, which is essential for the conversion of prothrombin to thrombin. In the penultimate step of the coagulation cascade, prothrombin is converted to thrombin by the prothrombinase complex composed of factor Xa (F10), cofactor Va (F5), and phospholipids. This activation requires factor Xa-catalyzed sequential cleavage at 2 sites, Arg-315 and Arg-364, along 2 possible pathways. In the first pathway, the first cleavage occurs at Arg-315, leading to the formation of the inactive intermediate prethrombin-2. This pathway preferentially occurs on platelets and in the absence of cofactor Va. In the second pathway, the first cleavage occurs at Arg-364, which separates protease domain into 2 chains that remain connected through a disulfide bond and generates the active intermediate meizothrombin. The presence of cofactor Va directs activation along the meizothrombin pathway and greatly accelerates the rate of cleavage at Arg-364, but has a smaller effect on the cleavage of meizothrombin at Arg-315. Meizothrombin accumulates as an intermediate when prothrombinase is assembled on the membrane of red blood cells.

The catalysed reaction is Selective cleavage of Arg-|-Gly bonds in fibrinogen to form fibrin and release fibrinopeptides A and B.. Activity is promoted in the presence of negatively charged surfaces, such as polyphosphate and dextran sulfate. Inhibited by SERPINA5. Functionally, thrombin, which cleaves bonds after Arg and Lys, converts fibrinogen to fibrin and activates factors V, VII, VIII, XIII, and, in complex with thrombomodulin, protein C. Functions in blood homeostasis, inflammation and wound healing. Activates coagulation factor XI (F11); activation is promoted by the contact with negatively charged surfaces. Triggers the production of pro-inflammatory cytokines, such as MCP-1/CCL2 and IL8/CXCL8, in endothelial cells. This is Prothrombin (F2) from Sus scrofa (Pig).